Consider the following 225-residue polypeptide: U2 small nuclear ribonucleoprotein B'' (225 aa).

Residues 7–86 (HTIYINNMND…KPMRIQYAKT (80 aa)) enclose the RRM 1 domain. Residues 100–144 (DKEKKKEKKKAKTMEQAAAAANKKPGQGTPNAANTQGTAAPNPQV) form a disordered region. At Lys111 the chain carries N6-acetyllysine; alternate. Residue Lys111 forms a Glycyl lysine isopeptide (Lys-Gly) (interchain with G-Cter in SUMO2); alternate linkage. Low complexity predominate over residues 113–123 (MEQAAAAANKK). Polar residues predominate over residues 127–140 (GTPNAANTQGTAAP). Tyr151 carries the post-translational modification Phosphotyrosine. The region spanning 151-225 (YILFLNNLPE…HAMKITYAKK (75 aa)) is the RRM 2 domain.

This sequence belongs to the RRM U1 A/B'' family. Identified in the spliceosome B complex. Identified in the spliceosome C complex. Present in a spliceosome complex assembled in vitro, and composed of SNRPB2, HPRP8BP and CRNKL1. Contributes to the binding of stem loop IV of U2 snRNA with SNRPP1.

It is found in the nucleus. Involved in pre-mRNA splicing as component of the spliceosome. Associated with sn-RNP U2, where it contributes to the binding of stem loop IV of U2 snRNA. This Mus musculus (Mouse) protein is U2 small nuclear ribonucleoprotein B'' (Snrpb2).